Here is a 479-residue protein sequence, read N- to C-terminus: UDP-glucose flavonoid 3-O-glucosyltransferase 6 (479 aa).

Histidine 17 (proton acceptor) is an active-site residue. Position 17 (histidine 17) interacts with an anthocyanidin. Aspartate 121 (charge relay) is an active-site residue. Residues threonine 143, alanine 354, glutamine 356, histidine 371, tryptophan 374, asparagine 375, serine 376, and glutamate 379 each contribute to the UDP-alpha-D-glucose site. Alanine 394 provides a ligand contact to an anthocyanidin. Positions 395 and 396 each coordinate UDP-alpha-D-glucose. The tract at residues 454–479 (MSRKALEEDGSSYSSLGRFLDQIQTS) is disordered.

The protein belongs to the UDP-glycosyltransferase family. Strongly expressed in achenes, with lower expression levels detected in receptacles.

It catalyses the reaction a flavonol + UDP-alpha-D-glucose = a flavonol 3-O-beta-D-glucoside + UDP + H(+). Its function is as follows. Broad spectrum multifunctional glucosyltransferase. Catalyzes the formation of flavonol 3-O-glucosides during fruit ripening. Accepted substrates include several flavonoids, hydroxycoumarins and beta-naphthols. Uses UDP-Glc as a sugar donor, but not UDP-Gal or UDP-GlcUA. May also be involved in detoxification of xenobiotics. The polypeptide is UDP-glucose flavonoid 3-O-glucosyltransferase 6 (Fragaria ananassa (Strawberry)).